The following is a 165-amino-acid chain: Endoribonuclease YbeY (165 aa).

Zn(2+)-binding residues include His130, His134, and His140.

Belongs to the endoribonuclease YbeY family. Zn(2+) serves as cofactor.

It localises to the cytoplasm. Functionally, single strand-specific metallo-endoribonuclease involved in late-stage 70S ribosome quality control and in maturation of the 3' terminus of the 16S rRNA. The sequence is that of Endoribonuclease YbeY from Streptococcus pneumoniae serotype 2 (strain D39 / NCTC 7466).